We begin with the raw amino-acid sequence, 215 residues long: MLQVYLVRHGETQWNAERRIQGQSDSPLTAKGEQQAMQVGERARSLSITHIISSDLGRTKRTAEIIAQACGCDITFDSRLRELDMGVLEKRQIDSLTEEEEGWRRQLVNGTQDGRIPGGESMQELSDRVHAALASCLELPQGSRPLLVSHGIALGCLVSTILGLPAWAERRLRLRNCSISRIDYQESQWLASGWVVETAGDVSHLDAPALDELQR.

Substrate contacts are provided by residues 8–15, 21–22, R58, K60, 82–85, 104–105, and 151–152; these read RHGETQWN, QG, ELDM, RR, and GI. The active-site Tele-phosphohistidine intermediate is H9. The Proton donor/acceptor role is filled by E82.

It belongs to the phosphoglycerate mutase family. GpmB subfamily.

It carries out the reaction (2R)-2-phosphoglycerate = (2R)-3-phosphoglycerate. It participates in carbohydrate degradation; glycolysis; pyruvate from D-glyceraldehyde 3-phosphate: step 3/5. The chain is Probable phosphoglycerate mutase GpmB from Salmonella choleraesuis (strain SC-B67).